Reading from the N-terminus, the 359-residue chain is 3-dehydroquinate synthase (359 aa).

Residues 71–76 (DGEAHK), 105–109 (GVIGD), 129–130 (TT), Lys-142, Lys-151, and 169–172 (TLHT) each bind NAD(+). Residues Glu-184, His-247, and His-264 each coordinate Zn(2+).

It belongs to the sugar phosphate cyclases superfamily. Dehydroquinate synthase family. NAD(+) is required as a cofactor. Co(2+) serves as cofactor. Requires Zn(2+) as cofactor.

It is found in the cytoplasm. It catalyses the reaction 7-phospho-2-dehydro-3-deoxy-D-arabino-heptonate = 3-dehydroquinate + phosphate. Its pathway is metabolic intermediate biosynthesis; chorismate biosynthesis; chorismate from D-erythrose 4-phosphate and phosphoenolpyruvate: step 2/7. Functionally, catalyzes the conversion of 3-deoxy-D-arabino-heptulosonate 7-phosphate (DAHP) to dehydroquinate (DHQ). This is 3-dehydroquinate synthase from Neisseria meningitidis serogroup B (strain ATCC BAA-335 / MC58).